The primary structure comprises 37 residues: Large ribosomal subunit protein bL36 (37 aa).

The protein belongs to the bacterial ribosomal protein bL36 family.

The sequence is that of Large ribosomal subunit protein bL36 from Caldanaerobacter subterraneus subsp. tengcongensis (strain DSM 15242 / JCM 11007 / NBRC 100824 / MB4) (Thermoanaerobacter tengcongensis).